The sequence spans 525 residues: Sterol O-acyltransferase 2 (525 aa).

Disordered regions lie at residues 1–34 (MQPK…THGT) and 77–97 (QDRP…ELHP). Topologically, residues 1–119 (MQPKVPQLRR…IDELMEVQHF (119 aa)) are cytoplasmic. The segment covering 9-23 (RRREGLGEEQEKGAR) has biased composition (basic and acidic residues). Residue histidine 118 coordinates cholesterol. A helical transmembrane segment spans residues 120–141 (RTIYHMFIAGLCVLIISTLAID). The Lumenal portion of the chain corresponds to 142 to 161 (FIDEGRLMLEFDLLLFSFGQ). A helical membrane pass occupies residues 162-187 (LPLALMTWVPMFLSTLLVPYQTLWLW). The Cytoplasmic segment spans residues 188 to 199 (ARPRAGGAWMLG). A helical transmembrane segment spans residues 200-223 (ASLGCVLLAAHAVVLCVLPVHVSV). The Lumenal portion of the chain corresponds to 224–231 (RHELPPAS). The chain crosses the membrane as a helical span at residues 232-255 (RCVLVFEQVRLLMKSYSFLRETVP). Over 256 to 296 (GIFCVRGGKGISPPSFSSYLYFLFCPTLIYRETYPRTPSIR) the chain is Cytoplasmic. Cysteine 280 carries the cysteine sulfenic acid (-SOH); alternate modification. A Glycyl cysteine thioester (Cys-Gly) (interchain with G-Cter in ubiquitin); alternate cross-link involves residue cysteine 280. The chain crosses the membrane as a helical span at residues 297–329 (WNYVAKNFAQVLGCLLYACFILGRLCVPVFANM). Residues 330–346 (SREPFSTRALLLSILHA) are Lumenal-facing. A helical transmembrane segment spans residues 347 to 372 (TGPGIFMLLLIFFAFLHCWLNAFAEM). The Cytoplasmic segment spans residues 373 to 420 (LRFGDRMFYRDWWNSTSFSNYYRTWNVVVHDWLYSYVYQDGLWLLGRR). Residues 380-386 (FYRDWWN) carry the FYXDWWN motif motif. Residues asparagine 392, arginine 395, asparagine 398, histidine 402, tyrosine 410, and serine 433 each coordinate an acyl-CoA. Residues 421-445 (ARGVAMLGVFLVSAVVHEYIFCFVL) traverse the membrane as a helical segment. Histidine 437 is an active-site residue. Residues 446-451 (GFFYPV) are Lumenal-facing. A helical transmembrane segment spans residues 452 to 467 (MLMLFLVFGGLLNFTM). Topologically, residues 468-473 (NDRHTG) are cytoplasmic. Residues 474–505 (PAWNILMWTFLFMGQGIQVSLYCQEWYARRHC) form a helical membrane-spanning segment. Residues 506–525 (PLPQTTFWGMVTPRSWSCHP) are Lumenal-facing.

It belongs to the membrane-bound acyltransferase family. Sterol o-acyltransferase subfamily. In terms of assembly, may form homo- or heterodimers. Interacts with INSIG1; the interaction is direct and promotes association with AMFR/gp78. In terms of processing, polyubiquitinated by AMFR/gp78 at Cys-280, leading to its degradation when the lipid levels are low. Association with AMFR/gp78 is mediated via interaction with INSIG1. High concentration of cholesterol and fatty acid results in Cys-280 oxidation, preventing ubiquitination at the same site, resulting in protein stabilization. Post-translationally, oxidized at Cys-280: high concentration of cholesterol and fatty acid induce reactive oxygen species, which oxidizes Cys-280, preventing ubiquitination at the same site, and resulting in protein stabilization.

Its subcellular location is the endoplasmic reticulum membrane. The catalysed reaction is a sterol + a long-chain fatty acyl-CoA = a long-chain 3-hydroxysterol ester + CoA. It catalyses the reaction cholesterol + an acyl-CoA = a cholesterol ester + CoA. It carries out the reaction cholesterol + (9Z)-octadecenoyl-CoA = cholesteryl (9Z-octadecenoate) + CoA. The enzyme catalyses (5Z,8Z,11Z,14Z,17Z)-eicosapentaenoyl-CoA + cholesterol = (5Z,8Z,11Z,14Z,17Z-eicosapentaenoyl)-cholesterol + CoA. The catalysed reaction is (9Z,12Z,15Z)-octadecatrienoyl-CoA + cholesterol = (9Z,12Z,15Z-octadecatrienoyl)-cholesterol + CoA. It catalyses the reaction (5Z,8Z,11Z,14Z)-eicosatetraenoyl-CoA + cholesterol = cholesteryl (5Z,8Z,11Z,14Z)-eicosatetraenoate + CoA. Functionally, catalyzes the formation of fatty acid-cholesterol esters, which are less soluble in membranes than cholesterol. Plays a role in lipoprotein assembly and dietary cholesterol absorption. Utilizes oleoyl-CoA ((9Z)-octadecenoyl-CoA) and linolenoyl-CoA ((9Z,12Z,15Z)-octadecatrienoyl-CoA) as substrates. May provide cholesteryl esters for lipoprotein secretion from hepatocytes and intestinal mucosa. This chain is Sterol O-acyltransferase 2, found in Mus musculus (Mouse).